Reading from the N-terminus, the 483-residue chain is Argininosuccinate lyase (483 aa).

It belongs to the lyase 1 family. Argininosuccinate lyase subfamily.

The protein resides in the cytoplasm. It catalyses the reaction 2-(N(omega)-L-arginino)succinate = fumarate + L-arginine. It participates in amino-acid biosynthesis; L-arginine biosynthesis; L-arginine from L-ornithine and carbamoyl phosphate: step 3/3. The chain is Argininosuccinate lyase from Archaeoglobus fulgidus (strain ATCC 49558 / DSM 4304 / JCM 9628 / NBRC 100126 / VC-16).